We begin with the raw amino-acid sequence, 328 residues long: P2Y purinoceptor 6 (328 aa).

Residues 1–27 are Extracellular-facing; sequence MEWDNGTGQALGLPPTTCVYRENFKQL. Asn5 carries an N-linked (GlcNAc...) asparagine glycan. A helical membrane pass occupies residues 28-48; it reads LLPPVYSAVLAAGLPLNICVI. Topologically, residues 49–62 are cytoplasmic; that stretch reads TQICTSRRALTRTA. The helical transmembrane segment at 63-83 threads the bilayer; it reads VYTLNLALADLLYACSLPLLI. Residues 84-101 are Extracellular-facing; the sequence is YNYAQGDHWPFGDFACRL. Cys99 and Cys177 form a disulfide bridge. The chain crosses the membrane as a helical span at residues 102 to 122; that stretch reads VRFLFYANLHGSILFLTCISF. Over 123–144 the chain is Cytoplasmic; that stretch reads QRYLGICHPLAPWHKRGGRRAA. The chain crosses the membrane as a helical span at residues 145-165; the sequence is WLVCVAVWLAVTTQCLPTAIF. Residues 166–194 are Extracellular-facing; sequence AATGIQRNRTVCYDLSPPALATHYMPYGM. A helical transmembrane segment spans residues 195–215; the sequence is ALTVIGFLLPFAALLACYCLL. Over 216–236 the chain is Cytoplasmic; the sequence is ACRLCRQDGPAEPVAQERRGK. A helical membrane pass occupies residues 237–257; the sequence is AARMAVVVAAAFAISFLPFHI. The Extracellular portion of the chain corresponds to 258-280; sequence TKTAYLAVRSTPGVPCTVLEAFA. Residues 281–303 traverse the membrane as a helical segment; it reads AAYKGTRPFASANSVLDPILFYF. The Cytoplasmic segment spans residues 304–328; the sequence is TQKKFRRRPHELLQKLTAKWQRQGR.

The protein belongs to the G-protein coupled receptor 1 family.

It is found in the cell membrane. Functionally, receptor for extracellular UDP &gt; UTP &gt; ATP. The activity of this receptor is mediated by G proteins which activate a phosphatidylinositol-calcium second messenger system. This Homo sapiens (Human) protein is P2Y purinoceptor 6 (P2RY6).